The chain runs to 334 residues: Holliday junction branch migration complex subunit RuvB (334 aa).

A large ATPase domain (RuvB-L) region spans residues 1–182 (MNERMVDQSM…FGVHLRLEYY (182 aa)). Residues L21, R22, G63, K66, T67, T68, 129-131 (EDF), R172, Y182, and R219 contribute to the ATP site. A Mg(2+)-binding site is contributed by T67. The tract at residues 183–253 (NESDLKEIII…TTKHALGLLQ (71 aa)) is small ATPAse domain (RuvB-S). Positions 256 to 334 (QHGLDYIDHK…HFAKSNEERE (79 aa)) are head domain (RuvB-H). Positions 292, 311, and 316 each coordinate DNA.

Belongs to the RuvB family. In terms of assembly, homohexamer. Forms an RuvA(8)-RuvB(12)-Holliday junction (HJ) complex. HJ DNA is sandwiched between 2 RuvA tetramers; dsDNA enters through RuvA and exits via RuvB. An RuvB hexamer assembles on each DNA strand where it exits the tetramer. Each RuvB hexamer is contacted by two RuvA subunits (via domain III) on 2 adjacent RuvB subunits; this complex drives branch migration. In the full resolvosome a probable DNA-RuvA(4)-RuvB(12)-RuvC(2) complex forms which resolves the HJ.

It localises to the cytoplasm. It catalyses the reaction ATP + H2O = ADP + phosphate + H(+). Functionally, the RuvA-RuvB-RuvC complex processes Holliday junction (HJ) DNA during genetic recombination and DNA repair, while the RuvA-RuvB complex plays an important role in the rescue of blocked DNA replication forks via replication fork reversal (RFR). RuvA specifically binds to HJ cruciform DNA, conferring on it an open structure. The RuvB hexamer acts as an ATP-dependent pump, pulling dsDNA into and through the RuvAB complex. RuvB forms 2 homohexamers on either side of HJ DNA bound by 1 or 2 RuvA tetramers; 4 subunits per hexamer contact DNA at a time. Coordinated motions by a converter formed by DNA-disengaged RuvB subunits stimulates ATP hydrolysis and nucleotide exchange. Immobilization of the converter enables RuvB to convert the ATP-contained energy into a lever motion, pulling 2 nucleotides of DNA out of the RuvA tetramer per ATP hydrolyzed, thus driving DNA branch migration. The RuvB motors rotate together with the DNA substrate, which together with the progressing nucleotide cycle form the mechanistic basis for DNA recombination by continuous HJ branch migration. Branch migration allows RuvC to scan DNA until it finds its consensus sequence, where it cleaves and resolves cruciform DNA. In Staphylococcus aureus (strain bovine RF122 / ET3-1), this protein is Holliday junction branch migration complex subunit RuvB.